Here is a 259-residue protein sequence, read N- to C-terminus: Protein unc-50 homolog B (259 aa).

The span at 1–11 (MLPTTSVSPRS) shows a compositional bias: polar residues. The disordered stretch occupies residues 1 to 21 (MLPTTSVSPRSPDNGILSPRD). Topologically, residues 1-82 (MLPTTSVSPR…TKDQWARDDP (82 aa)) are cytoplasmic. Residues 83-103 (AFLVLLGIWLCVSTVGFGFVL) form a helical membrane-spanning segment. The Lumenal portion of the chain corresponds to 104–109 (DMSFFE). The helical transmembrane segment at 110–130 (TFTLLLWVVFIDCVGVGLLIA) threads the bilayer. Residues 131-158 (TSMWFVSNKYMVNRQGKDYDVEWGYTFD) are Cytoplasmic-facing. A helical transmembrane segment spans residues 159–179 (VHLNAFYPLLVILHFIQLFFI). Residues 180-181 (NH) lie on the Lumenal side of the membrane. The helical transmembrane segment at 182-202 (VILTGWFIGCFVGNTLWLIAI) threads the bilayer. At 203–222 (GYYIYITFLGYSALPFLKNT) the chain is on the cytoplasmic side. The helical transmembrane segment at 223–243 (VVLLYPFAALALLYILSLALG) threads the bilayer. Residues 244-259 (WNFTAKLCLFYKYRVR) are Lumenal-facing.

Belongs to the unc-50 family.

Its subcellular location is the nucleus inner membrane. The protein resides in the golgi apparatus membrane. Its function is as follows. Involved in the cell surface expression of neuronal nicotinic receptors. Binds RNA. This is Protein unc-50 homolog B (unc50-b) from Xenopus laevis (African clawed frog).